The chain runs to 185 residues: Ribosome-recycling factor (185 aa).

The protein belongs to the RRF family.

It is found in the cytoplasm. Functionally, responsible for the release of ribosomes from messenger RNA at the termination of protein biosynthesis. May increase the efficiency of translation by recycling ribosomes from one round of translation to another. The protein is Ribosome-recycling factor of Rhodococcus erythropolis (strain PR4 / NBRC 100887).